A 657-amino-acid chain; its full sequence is tRNA 5-methylaminomethyl-2-thiouridine biosynthesis bifunctional protein MnmC (657 aa).

The segment at 1–239 is tRNA (mnm(5)s(2)U34)-methyltransferase; that stretch reads MTDRIVPATL…KRAMLVGEFA (239 aa). Residues 263 to 657 form an FAD-dependent cmnm(5)s(2)U34 oxidoreductase region; that stretch reads IGAGLAGCAV…VRALRHGRVA (395 aa).

It in the N-terminal section; belongs to the methyltransferase superfamily. tRNA (mnm(5)s(2)U34)-methyltransferase family. In the C-terminal section; belongs to the DAO family. The cofactor is FAD.

Its subcellular location is the cytoplasm. It carries out the reaction 5-aminomethyl-2-thiouridine(34) in tRNA + S-adenosyl-L-methionine = 5-methylaminomethyl-2-thiouridine(34) in tRNA + S-adenosyl-L-homocysteine + H(+). In terms of biological role, catalyzes the last two steps in the biosynthesis of 5-methylaminomethyl-2-thiouridine (mnm(5)s(2)U) at the wobble position (U34) in tRNA. Catalyzes the FAD-dependent demodification of cmnm(5)s(2)U34 to nm(5)s(2)U34, followed by the transfer of a methyl group from S-adenosyl-L-methionine to nm(5)s(2)U34, to form mnm(5)s(2)U34. In Burkholderia pseudomallei (strain 668), this protein is tRNA 5-methylaminomethyl-2-thiouridine biosynthesis bifunctional protein MnmC.